The chain runs to 600 residues: Myelin expression factor 2 (600 aa).

The segment at 1–101 (MADANKAEVP…GEKKGPNRNR (101 aa)) is disordered. T13 is subject to Phosphothreonine. S17 carries the post-translational modification Phosphoserine. Basic and acidic residues predominate over residues 27–42 (GEPRREPHPAEAEKQQ). A Glycyl lysine isopeptide (Lys-Gly) (interchain with G-Cter in SUMO2) cross-link involves residue K53. 2 stretches are compositionally biased toward basic and acidic residues: residues 54–72 (MEND…EKST) and 83–96 (YSKD…EKKG). RRM domains lie at 100–178 (NRVF…EDPD) and 233–310 (STIF…MDDK). An Omega-N-methylarginine modification is found at R406. S431 carries the phosphoserine modification. Residues 523-599 (NQIFVRNLPF…REIDVRLDRN (77 aa)) enclose the RRM 3 domain.

As to quaternary structure, monomer.

The protein localises to the nucleus. Its function is as follows. Transcriptional repressor of the myelin basic protein gene (MBP). Binds to the proximal MB1 element 5'-TTGTCC-3' of the MBP promoter. Its binding to MB1 and function are inhibited by PURA. The sequence is that of Myelin expression factor 2 (MYEF2) from Homo sapiens (Human).